The sequence spans 491 residues: Peptidyl-prolyl isomerase CWC27 (491 aa).

The PPIase cyclophilin-type domain maps to 11 to 167; that stretch reads TNGKVIIDTT…IPPKIRRIHI (157 aa). Basic and acidic residues-rich tracts occupy residues 186-202, 268-298, and 306-316; these read AQQK…EQRE, DLGK…REKA, and AEIKRMEEDLR. Disordered stretches follow at residues 186-427 and 464-491; these read AQQK…IEVD and RDLL…GRNR. Positions 277–327 form a coiled coil; it reads ASEEKKAVDLKNIRAQHEREKAGGSAARQAEIKRMEEDLRRLKKRSGSVSD. Positions 323-333 are enriched in low complexity; that stretch reads GSVSDSESDSS. A compositionally biased stretch (basic residues) spans 352–367; the sequence is ASKRGRAAMKAGNKRG. Composition is skewed to acidic residues over residues 391–406 and 418–427; these read DEPE…EGEA and AEEEGGIEVD. Over residues 482–491 the composition is skewed to basic residues; it reads RTVRNSGRNR.

The protein belongs to the cyclophilin-type PPIase family. CWC27 subfamily. In terms of assembly, associated with the spliceosome.

Its subcellular location is the cytoplasm. The protein localises to the nucleus. It catalyses the reaction [protein]-peptidylproline (omega=180) = [protein]-peptidylproline (omega=0). Functionally, PPIases accelerate the folding of proteins. It catalyzes the cis-trans isomerization of proline imidic peptide bonds in oligopeptides. Involved in pre-mRNA splicing. This chain is Peptidyl-prolyl isomerase CWC27 (CWC27), found in Cryptococcus neoformans var. neoformans serotype D (strain B-3501A) (Filobasidiella neoformans).